Reading from the N-terminus, the 267-residue chain is Large ribosomal subunit protein mL57 (267 aa).

Residues 43-54 (SSSAVQQEQDAS) are compositionally biased toward low complexity. The disordered stretch occupies residues 43–73 (SSSAVQQEQDASGTSSSQQPRPRWSYTPERM).

It belongs to the ribonuclease III family. Mitochondrion-specific ribosomal protein mL57 subfamily. As to quaternary structure, component of the mitochondrial large ribosomal subunit (mt-LSU). Mature N.crassa 74S mitochondrial ribosomes consist of a small (37S) and a large (54S) subunit. The 37S small subunit contains a 16S ribosomal RNA (16S mt-rRNA) and 32 different proteins. The 54S large subunit contains a 23S rRNA (23S mt-rRNA) and 42 different proteins. mL57 forms a heterodimer with mL44 and stabilizes rRNA expansion segments 1/2 at a membrane-facing protuberance close to the point of attachment of the ribosome to the translocon in the membrane.

The protein localises to the mitochondrion. Its function is as follows. Component of the mitochondrial ribosome (mitoribosome), a dedicated translation machinery responsible for the synthesis of mitochondrial genome-encoded proteins, including at least some of the essential transmembrane subunits of the mitochondrial respiratory chain. The mitoribosomes are attached to the mitochondrial inner membrane and translation products are cotranslationally integrated into the membrane. The sequence is that of Large ribosomal subunit protein mL57 (mrpl15) from Neurospora crassa (strain ATCC 24698 / 74-OR23-1A / CBS 708.71 / DSM 1257 / FGSC 987).